A 151-amino-acid chain; its full sequence is Small ribosomal subunit protein uS15 (151 aa).

The segment at 1–20 (MARLHSGKRGSSGSTKPLRT) is disordered.

It belongs to the universal ribosomal protein uS15 family. Part of the 30S ribosomal subunit.

This is Small ribosomal subunit protein uS15 from Methanococcus vannielii (strain ATCC 35089 / DSM 1224 / JCM 13029 / OCM 148 / SB).